The primary structure comprises 773 residues: Tyrosine kinase receptor Cad96Ca (773 aa).

The signal sequence occupies residues 1 to 48 (MVYHHHNHESRIIHCRKQLTSWRRRSLLLTIIVVTATVVSLISQEAEA). Residues 49–315 (HNQNAPPILY…ITIFSLKSGT (267 aa)) lie on the Extracellular side of the membrane. Residues 58 to 172 (YVRERNWRIS…ENSSGYRPQT (115 aa)) enclose the Cadherin domain. N-linked (GlcNAc...) asparagine glycans are attached at residues Asn126, Asn164, and Asn180. The tract at residues 196–302 (SIRNGLPNSR…TPSGGHHNNS (107 aa)) is disordered. A compositionally biased stretch (pro residues) spans 209–235 (WYPPVPQNNIFGPPPFGNNYPPPPPNI). Over residues 243–253 (SGEEEQPDEEV) the composition is skewed to acidic residues. Polar residues-rich tracts occupy residues 254–283 (TPTT…STRV) and 290–302 (ETTT…HNNS). N-linked (GlcNAc...) asparagine glycans are attached at residues Asn278, Asn279, Asn300, and Asn301. Residues 316–336 (IPIVVTVGGFFVAIAVLLAYL) form a helical membrane-spanning segment. Over 337–773 (CRRRLCAISR…NIVSLSGEKL (437 aa)) the chain is Cytoplasmic. Disordered stretches follow at residues 352–373 (KEKE…LTDD) and 411–447 (TGVT…AGSS). The span at 361 to 373 (SNQSQLSSTLTDD) shows a compositional bias: polar residues. Low complexity predominate over residues 411-433 (TGVTNGGVSSPGVPSPGTGEPGS). In terms of domain architecture, Protein kinase spans 470-749 (LKFFNILGEG…MLDKLLHTEM (280 aa)). ATP contacts are provided by residues 476–484 (LGEGAFGQV) and Lys504. The active-site Proton acceptor is Asp610.

It belongs to the protein kinase superfamily. Tyr protein kinase family. Fibroblast growth factor receptor subfamily.

It is found in the membrane. The catalysed reaction is L-tyrosyl-[protein] + ATP = O-phospho-L-tyrosyl-[protein] + ADP + H(+). This chain is Tyrosine kinase receptor Cad96Ca (Cad96Ca), found in Drosophila melanogaster (Fruit fly).